The sequence spans 248 residues: Adenosylcobinamide-GDP ribazoletransferase (248 aa).

Transmembrane regions (helical) follow at residues 3 to 23 (ELKA…PINI), 35 to 55 (SYFP…YLLL), 63 to 83 (IVMT…HIDG), 109 to 129 (LGTN…LFLS), 135 to 155 (LLFS…VFSI), 180 to 199 (FVIA…PLKD), 200 to 219 (LALL…KYIS), and 228 to 248 (DTLG…FSIL).

The protein belongs to the CobS family. Requires Mg(2+) as cofactor.

The protein resides in the cell membrane. It catalyses the reaction alpha-ribazole + adenosylcob(III)inamide-GDP = adenosylcob(III)alamin + GMP + H(+). It carries out the reaction alpha-ribazole 5'-phosphate + adenosylcob(III)inamide-GDP = adenosylcob(III)alamin 5'-phosphate + GMP + H(+). The protein operates within cofactor biosynthesis; adenosylcobalamin biosynthesis; adenosylcobalamin from cob(II)yrinate a,c-diamide: step 7/7. Joins adenosylcobinamide-GDP and alpha-ribazole to generate adenosylcobalamin (Ado-cobalamin). Also synthesizes adenosylcobalamin 5'-phosphate from adenosylcobinamide-GDP and alpha-ribazole 5'-phosphate. This chain is Adenosylcobinamide-GDP ribazoletransferase, found in Caldanaerobacter subterraneus subsp. tengcongensis (strain DSM 15242 / JCM 11007 / NBRC 100824 / MB4) (Thermoanaerobacter tengcongensis).